A 264-amino-acid polypeptide reads, in one-letter code: Pyridoxine 5'-phosphate synthase (264 aa).

N28 provides a ligand contact to 3-amino-2-oxopropyl phosphate. 1-deoxy-D-xylulose 5-phosphate is bound at residue 30-31; sequence DH. R39 is a 3-amino-2-oxopropyl phosphate binding site. H64 functions as the Proton acceptor in the catalytic mechanism. 1-deoxy-D-xylulose 5-phosphate is bound by residues R66 and H71. The active-site Proton acceptor is E91. Residue T121 coordinates 1-deoxy-D-xylulose 5-phosphate. The active-site Proton donor is the H217. Residues G218 and 239–240 each bind 3-amino-2-oxopropyl phosphate; that span reads GH.

Belongs to the PNP synthase family. As to quaternary structure, homooctamer; tetramer of dimers.

Its subcellular location is the cytoplasm. The enzyme catalyses 3-amino-2-oxopropyl phosphate + 1-deoxy-D-xylulose 5-phosphate = pyridoxine 5'-phosphate + phosphate + 2 H2O + H(+). It participates in cofactor biosynthesis; pyridoxine 5'-phosphate biosynthesis; pyridoxine 5'-phosphate from D-erythrose 4-phosphate: step 5/5. Catalyzes the complicated ring closure reaction between the two acyclic compounds 1-deoxy-D-xylulose-5-phosphate (DXP) and 3-amino-2-oxopropyl phosphate (1-amino-acetone-3-phosphate or AAP) to form pyridoxine 5'-phosphate (PNP) and inorganic phosphate. In Psychrobacter arcticus (strain DSM 17307 / VKM B-2377 / 273-4), this protein is Pyridoxine 5'-phosphate synthase.